A 139-amino-acid polypeptide reads, in one-letter code: Putative nickel-responsive regulator (139 aa).

Ni(2+)-binding residues include H79, H90, H92, and C98.

It belongs to the transcriptional regulatory CopG/NikR family. The cofactor is Ni(2+).

In terms of biological role, transcriptional regulator. The chain is Putative nickel-responsive regulator from Anaeromyxobacter sp. (strain K).